Reading from the N-terminus, the 111-residue chain is Large ribosomal subunit protein uL22 (111 aa).

It belongs to the universal ribosomal protein uL22 family. Part of the 50S ribosomal subunit.

Functionally, this protein binds specifically to 23S rRNA; its binding is stimulated by other ribosomal proteins, e.g. L4, L17, and L20. It is important during the early stages of 50S assembly. It makes multiple contacts with different domains of the 23S rRNA in the assembled 50S subunit and ribosome. In terms of biological role, the globular domain of the protein is located near the polypeptide exit tunnel on the outside of the subunit, while an extended beta-hairpin is found that lines the wall of the exit tunnel in the center of the 70S ribosome. The protein is Large ribosomal subunit protein uL22 of Clostridium perfringens (strain ATCC 13124 / DSM 756 / JCM 1290 / NCIMB 6125 / NCTC 8237 / Type A).